Consider the following 210-residue polypeptide: Urease accessory protein UreF (210 aa).

The protein belongs to the UreF family. UreD, UreF and UreG form a complex that acts as a GTP-hydrolysis-dependent molecular chaperone, activating the urease apoprotein by helping to assemble the nickel containing metallocenter of UreC. The UreE protein probably delivers the nickel.

The protein localises to the cytoplasm. In terms of biological role, required for maturation of urease via the functional incorporation of the urease nickel metallocenter. This is Urease accessory protein UreF from Cereibacter sphaeroides (strain ATCC 17025 / ATH 2.4.3) (Rhodobacter sphaeroides).